Reading from the N-terminus, the 490-residue chain is ATP synthase subunit beta, chloroplastic (490 aa).

Residue 170 to 177 (GGAGVGKT) coordinates ATP.

It belongs to the ATPase alpha/beta chains family. In terms of assembly, F-type ATPases have 2 components, CF(1) - the catalytic core - and CF(0) - the membrane proton channel. CF(1) has five subunits: alpha(3), beta(3), gamma(1), delta(1), epsilon(1). CF(0) has four main subunits: a(1), b(1), b'(1) and c(9-12).

Its subcellular location is the plastid. It is found in the chloroplast thylakoid membrane. The catalysed reaction is ATP + H2O + 4 H(+)(in) = ADP + phosphate + 5 H(+)(out). Its function is as follows. Produces ATP from ADP in the presence of a proton gradient across the membrane. The catalytic sites are hosted primarily by the beta subunits. The sequence is that of ATP synthase subunit beta, chloroplastic from Convolvulus arvensis (Field bindweed).